The sequence spans 481 residues: Cysteine--tRNA ligase (481 aa).

C29 provides a ligand contact to Zn(2+). The 'HIGH' region signature appears at V31–H41. Zn(2+) is bound by residues C209, H234, and E238. The 'KMSKS' region motif lies at K266–S270. K269 is a binding site for ATP.

Belongs to the class-I aminoacyl-tRNA synthetase family. As to quaternary structure, monomer. Requires Zn(2+) as cofactor.

It is found in the cytoplasm. The enzyme catalyses tRNA(Cys) + L-cysteine + ATP = L-cysteinyl-tRNA(Cys) + AMP + diphosphate. In Geobacter sulfurreducens (strain ATCC 51573 / DSM 12127 / PCA), this protein is Cysteine--tRNA ligase.